The following is a 398-amino-acid chain: Subtilisin-like protease CPC735_015300 (398 aa).

The signal sequence occupies residues Met1–Ala19. A propeptide spanning residues Ala20–Thr116 is cleaved from the precursor. Positions Gln35–Leu115 constitute an Inhibitor I9 domain. The region spanning Thr126–Gln398 is the Peptidase S8 domain. Active-site charge relay system residues include Asp158 and His189. N-linked (GlcNAc...) asparagine glycosylation is present at Asn250. Catalysis depends on Ser344, which acts as the Charge relay system. Residue Asn362 is glycosylated (N-linked (GlcNAc...) asparagine).

It belongs to the peptidase S8 family.

Its subcellular location is the secreted. Its function is as follows. Secreted subtilisin-like serine protease with keratinolytic activity that contributes to pathogenicity. This chain is Subtilisin-like protease CPC735_015300, found in Coccidioides posadasii (strain C735) (Valley fever fungus).